The sequence spans 228 residues: Claudin-10 (228 aa).

The helical transmembrane segment at Met1–Val21 threads the bilayer. Over Ser22–Arg80 the chain is Extracellular. A helical transmembrane segment spans residues Gly81 to Met101. Over Lys102–Lys115 the chain is Cytoplasmic. Residues Ile116–Ser136 traverse the membrane as a helical segment. The Extracellular portion of the chain corresponds to Leu137 to Ala160. Residues Ala161–Phe181 form a helical membrane-spanning segment. Residues Ser182–Val228 lie on the Cytoplasmic side of the membrane.

The protein belongs to the claudin family. Can form homodimers both in trans (interaction between CLDN10 molecules in opposing membranes) and in cis (interaction between CLDN10 molecules within one membrane). Interacts with CLDN19.

Its subcellular location is the cell junction. It localises to the tight junction. The protein resides in the cell membrane. It carries out the reaction Na(+)(in) = Na(+)(out). The catalysed reaction is Li(+)(in) = Li(+)(out). It catalyses the reaction K(+)(in) = K(+)(out). The enzyme catalyses Rb(+)(in) = Rb(+)(out). It carries out the reaction Cs(+)(in) = Cs(+)(out). The catalysed reaction is NH4(+)(in) = NH4(+)(out). It catalyses the reaction methylamine(out) = methylamine(in). The enzyme catalyses Mg(2+)(in) = Mg(2+)(out). It carries out the reaction Ca(2+)(in) = Ca(2+)(out). The catalysed reaction is Sr(2+)(in) = Sr(2+)(out). It catalyses the reaction chloride(in) = chloride(out). The enzyme catalyses nitrate(in) = nitrate(out). Forms paracellular channels: polymerizes in tight junction strands with cation- and anion-selective channels through the strands, conveying epithelial permeability in a process known as paracellular tight junction permeability. In sweat glands and in the thick ascending limb (TAL) of Henle's loop in kidney, it controls paracellular sodium permeability which is essential for proper sweat production and renal function. In renal proximal tubules, it conveys selective chloride over hydrogencarbonate anion permeability which is required for renal chloride reabsorption and salt homeostasis. The sequence is that of Claudin-10 (CLDN10) from Pongo abelii (Sumatran orangutan).